The primary structure comprises 221 residues: Cytidylate kinase 1 (221 aa).

Residue 7–15 (GPSASGKSS) participates in ATP binding.

It belongs to the cytidylate kinase family. Type 1 subfamily.

It is found in the cytoplasm. It catalyses the reaction CMP + ATP = CDP + ADP. It carries out the reaction dCMP + ATP = dCDP + ADP. The protein is Cytidylate kinase 1 of Borreliella afzelii (strain PKo) (Borrelia afzelii).